The sequence spans 459 residues: Argininosuccinate lyase (459 aa).

Belongs to the lyase 1 family. Argininosuccinate lyase subfamily.

It is found in the cytoplasm. The catalysed reaction is 2-(N(omega)-L-arginino)succinate = fumarate + L-arginine. It participates in amino-acid biosynthesis; L-arginine biosynthesis; L-arginine from L-ornithine and carbamoyl phosphate: step 3/3. This is Argininosuccinate lyase from Oceanobacillus iheyensis (strain DSM 14371 / CIP 107618 / JCM 11309 / KCTC 3954 / HTE831).